The primary structure comprises 324 residues: Glyoxylate/hydroxypyruvate reductase B (324 aa).

Residues Arg-237 and Glu-266 contribute to the active site. Residue His-285 is the Proton donor of the active site.

This sequence belongs to the D-isomer specific 2-hydroxyacid dehydrogenase family. GhrB subfamily. In terms of assembly, homodimer.

Its subcellular location is the cytoplasm. The enzyme catalyses glycolate + NADP(+) = glyoxylate + NADPH + H(+). The catalysed reaction is (R)-glycerate + NAD(+) = 3-hydroxypyruvate + NADH + H(+). It catalyses the reaction (R)-glycerate + NADP(+) = 3-hydroxypyruvate + NADPH + H(+). In terms of biological role, catalyzes the NADPH-dependent reduction of glyoxylate and hydroxypyruvate into glycolate and glycerate, respectively. This is Glyoxylate/hydroxypyruvate reductase B from Salmonella paratyphi A (strain ATCC 9150 / SARB42).